Here is a 180-residue protein sequence, read N- to C-terminus: uncharacterized protein (180 aa).

The disordered stretch occupies residues 1-93 (MPSSVPKTSI…LPRRRNPGWV (93 aa)). Low complexity-rich tracts occupy residues 9–25 (SIES…SQAS) and 47–64 (LTSS…SSSQ).

This is an uncharacterized protein from Homo sapiens (Human).